We begin with the raw amino-acid sequence, 145 residues long: Leghemoglobin-1 (145 aa).

Residues 3-145 (AFSDKQEALV…ELAAAIKKAY (143 aa)) form the Globin domain. Nitrated tyrosine occurs at positions 26 and 31. Ser-46 serves as a coordination point for heme b. Phosphoserine is present on Ser-46. O2 is bound at residue His-62. Positions 65, 93, and 96 each coordinate heme b. Tyr-134 carries the post-translational modification Nitrated tyrosine.

Belongs to the plant globin family. Monomer. Nitrated in effective nodules and particularly in hypoxic conditions; this mechanism may play a protective role in the symbiosis by buffering toxic peroxynitrite NO(2)(-). Nitration level decrease during nodule senescence. In terms of processing, phosphorylation at Ser-46 disrupts the molecular environment of its porphyrin ring oxygen binding pocket, thus leading to a reduced oxygen consumption and to the delivery of oxygen O(2) to symbiosomes. As to expression, root nodules.

It is found in the cytoplasm. The protein localises to the cytosol. It localises to the nucleus. Leghemoglobin that reversibly binds oxygen O(2) through a pentacoordinated heme iron. In root nodules, facilitates the diffusion of oxygen to the bacteroids while preventing the bacterial nitrogenase from being inactivated by buffering dioxygen, nitric oxide and carbon monoxide, and promoting the formation of reactive oxygen species (ROS, e.g. H(2)O(2)). This role is essential for symbiotic nitrogen fixation (SNF). The protein is Leghemoglobin-1 of Vigna unguiculata (Cowpea).